Reading from the N-terminus, the 437-residue chain is Ribosomal protein uS12 methylthiotransferase RimO (437 aa).

One can recognise an MTTase N-terminal domain in the interval 9 to 128; it reads NKINVITLGC…LLKALGADYK (120 aa). Residues Cys-18, Cys-57, Cys-91, Cys-152, Cys-156, and Cys-159 each coordinate [4Fe-4S] cluster. In terms of domain architecture, Radical SAM core spans 138 to 368; it reads TTPKNYAYLK…MELQSQISWD (231 aa). The region spanning 371–437 is the TRAM domain; it reads QEKVGQVFRC…TEFDLYGEPA (67 aa).

It belongs to the methylthiotransferase family. RimO subfamily. [4Fe-4S] cluster serves as cofactor.

It localises to the cytoplasm. The catalysed reaction is L-aspartate(89)-[ribosomal protein uS12]-hydrogen + (sulfur carrier)-SH + AH2 + 2 S-adenosyl-L-methionine = 3-methylsulfanyl-L-aspartate(89)-[ribosomal protein uS12]-hydrogen + (sulfur carrier)-H + 5'-deoxyadenosine + L-methionine + A + S-adenosyl-L-homocysteine + 2 H(+). Its function is as follows. Catalyzes the methylthiolation of an aspartic acid residue of ribosomal protein uS12. In Flavobacterium johnsoniae (strain ATCC 17061 / DSM 2064 / JCM 8514 / BCRC 14874 / CCUG 350202 / NBRC 14942 / NCIMB 11054 / UW101) (Cytophaga johnsonae), this protein is Ribosomal protein uS12 methylthiotransferase RimO.